Reading from the N-terminus, the 433-residue chain is Succinate--CoA ligase [GDP-forming] subunit beta, mitochondrial (433 aa).

The N-terminal 38 residues, 1-38 (MASPVAIAAQAGKLLRERALRPLLAVRSQAGHLTPRRW), are a transit peptide targeting the mitochondrion. The ATP-grasp domain occupies 47–275 (KKLMSEHGVR…NAEFRQKDIF (229 aa)). Position 58 (Q58) interacts with GTP. K67 is modified (N6-acetyllysine; alternate). The residue at position 67 (K67) is an N6-succinyllysine; alternate. K74 is subject to N6-acetyllysine. The residue at position 79 (K79) is an N6-succinyllysine. 91–93 (GRG) is a GTP binding site. 3 positions are modified to N6-acetyllysine: K112, K133, and K140. L147 provides a ligand contact to GTP. S162 is modified (phosphoserine). K201 carries the post-translational modification N6-acetyllysine. S217 carries the phosphoserine modification. N6-acetyllysine is present on residues K219 and K228. Mg(2+) is bound by residues N244 and D258. K272 is modified (N6-acetyllysine). N309 provides a ligand contact to substrate. N6-succinyllysine is present on K339. K348 carries the N6-acetyllysine modification. 366-368 (GIV) contributes to the substrate binding site. An N6-acetyllysine mark is found at K387, K407, and K424.

It belongs to the succinate/malate CoA ligase beta subunit family. GTP-specific subunit beta subfamily. Heterodimer of an alpha and a beta subunit. The beta subunit determines specificity for GTP. Requires Mg(2+) as cofactor.

Its subcellular location is the mitochondrion. It catalyses the reaction GTP + succinate + CoA = succinyl-CoA + GDP + phosphate. The protein operates within carbohydrate metabolism; tricarboxylic acid cycle; succinate from succinyl-CoA (ligase route): step 1/1. In terms of biological role, GTP-specific succinyl-CoA synthetase functions in the citric acid cycle (TCA), coupling the hydrolysis of succinyl-CoA to the synthesis of GTP and thus represents the only step of substrate-level phosphorylation in the TCA. The beta subunit provides nucleotide specificity of the enzyme and binds the substrate succinate, while the binding sites for coenzyme A and phosphate are found in the alpha subunit. The chain is Succinate--CoA ligase [GDP-forming] subunit beta, mitochondrial from Mus musculus (Mouse).